The primary structure comprises 451 residues: Phosphoglucosamine mutase (451 aa).

The active-site Phosphoserine intermediate is the Ser-101. 4 residues coordinate Mg(2+): Ser-101, Asp-241, Asp-243, and Asp-245. Ser-101 is subject to Phosphoserine.

This sequence belongs to the phosphohexose mutase family. It depends on Mg(2+) as a cofactor. In terms of processing, activated by phosphorylation.

It carries out the reaction alpha-D-glucosamine 1-phosphate = D-glucosamine 6-phosphate. Catalyzes the conversion of glucosamine-6-phosphate to glucosamine-1-phosphate. This is Phosphoglucosamine mutase from Exiguobacterium sibiricum (strain DSM 17290 / CCUG 55495 / CIP 109462 / JCM 13490 / 255-15).